We begin with the raw amino-acid sequence, 130 residues long: Biotin carboxyl carrier protein (130 aa).

Residues 20–64 form a disordered region; that stretch reads EISESSVPAATPITPTTENTRAASDQKQQSQTPSPAATASAANTM. Residues 23 to 46 are compositionally biased toward polar residues; sequence ESSVPAATPITPTTENTRAASDQK. Positions 47-64 are enriched in low complexity; the sequence is QQSQTPSPAATASAANTM. In terms of domain architecture, Biotinyl-binding spans 55–130; the sequence is AATASAANTM…NAGDNLITIA (76 aa). Position 96 is an N6-biotinyllysine (K96).

The polypeptide is Biotin carboxyl carrier protein (bcc) (Streptococcus mutans serotype c (strain ATCC 700610 / UA159)).